A 120-amino-acid polypeptide reads, in one-letter code: Small ribosomal subunit protein uS13 (120 aa).

Residues 93 to 120 form a disordered region; that stretch reads RKGLPVRGQTTKNNARTRKGKKKTVGSK. The span at 107-120 shows a compositional bias: basic residues; sequence ARTRKGKKKTVGSK.

This sequence belongs to the universal ribosomal protein uS13 family. Part of the 30S ribosomal subunit. Forms a loose heterodimer with protein S19. Forms two bridges to the 50S subunit in the 70S ribosome.

Functionally, located at the top of the head of the 30S subunit, it contacts several helices of the 16S rRNA. In the 70S ribosome it contacts the 23S rRNA (bridge B1a) and protein L5 of the 50S subunit (bridge B1b), connecting the 2 subunits; these bridges are implicated in subunit movement. Contacts the tRNAs in the A and P-sites. The sequence is that of Small ribosomal subunit protein uS13 from Helicobacter acinonychis (strain Sheeba).